A 373-amino-acid chain; its full sequence is Peptide chain release factor 1-like, mitochondrial (373 aa).

Residues 1–25 (MRSGFLSGARRLWARRAFSRTPPPS) constitute a mitochondrion transit peptide. Positions 56–110 (QLAAAARLLSEKERELRDTESLLHDENEDLKKLAESEIALCQKQITELKHQIISL) form a coiled coil. Positions 229-293 (PKDLRIDTKR…LRARLYSMHL (65 aa)) are GGQ domain. The short motif at 243–245 (GGQ) is the GGQ element. Gln245 is subject to N5-methylglutamine.

The protein belongs to the prokaryotic/mitochondrial release factor family. Post-translationally, methylation of glutamine in the GGQ triplet by HEMK1 is conserved from bacteria to mammals.

The protein resides in the mitochondrion. Mitochondrial peptide chain release factor that directs the termination of translation in response to the peptide chain termination codons UAA and UAG. The polypeptide is Peptide chain release factor 1-like, mitochondrial (Mtrf1l) (Mus musculus (Mouse)).